A 599-amino-acid chain; its full sequence is Elongation factor 4 (599 aa).

One can recognise a tr-type G domain in the interval 5-187; it reads NRIRNFSIVA…AIVTRLPAPK (183 aa). Residues 17-22 and 134-137 contribute to the GTP site; these read DHGKST and NKVD.

This sequence belongs to the TRAFAC class translation factor GTPase superfamily. Classic translation factor GTPase family. LepA subfamily.

The protein resides in the cell inner membrane. It carries out the reaction GTP + H2O = GDP + phosphate + H(+). Functionally, required for accurate and efficient protein synthesis under certain stress conditions. May act as a fidelity factor of the translation reaction, by catalyzing a one-codon backward translocation of tRNAs on improperly translocated ribosomes. Back-translocation proceeds from a post-translocation (POST) complex to a pre-translocation (PRE) complex, thus giving elongation factor G a second chance to translocate the tRNAs correctly. Binds to ribosomes in a GTP-dependent manner. In Jannaschia sp. (strain CCS1), this protein is Elongation factor 4.